The chain runs to 169 residues: Large ribosomal subunit protein uL10 (169 aa).

Belongs to the universal ribosomal protein uL10 family. Part of the ribosomal stalk of the 50S ribosomal subunit. The N-terminus interacts with L11 and the large rRNA to form the base of the stalk. The C-terminus forms an elongated spine to which L12 dimers bind in a sequential fashion forming a multimeric L10(L12)X complex.

Its function is as follows. Forms part of the ribosomal stalk, playing a central role in the interaction of the ribosome with GTP-bound translation factors. This Staphylococcus saprophyticus subsp. saprophyticus (strain ATCC 15305 / DSM 20229 / NCIMB 8711 / NCTC 7292 / S-41) protein is Large ribosomal subunit protein uL10.